The chain runs to 358 residues: Phospho-N-acetylmuramoyl-pentapeptide-transferase (358 aa).

10 consecutive transmembrane segments (helical) span residues 27–47 (LFNNFIFIGVFILFFFLSLFA), 81–101 (MGGVFLMIPFFILLLIITINL), 106–126 (LFLLLLTIFGFYITGFLDDYL), 147–167 (VISIIFILLAYEKNLINPLVI), 171–191 (SWVINMNIFILPISFLVLVGI), 201–221 (LDGLAAGCSGIVFYGLGTEIL), 228–248 (LFVFSILCFSMSGLCLGFLKY), 255–275 (IFMGDTGSLSIGATLGTIALL), 278–298 (SVFTLSIFSGIFIIESLSVII), and 336–356 (IVENFWKINILLIILGIVLKI).

Belongs to the glycosyltransferase 4 family. MraY subfamily. It depends on Mg(2+) as a cofactor.

Its subcellular location is the cell inner membrane. The catalysed reaction is UDP-N-acetyl-alpha-D-muramoyl-L-alanyl-gamma-D-glutamyl-meso-2,6-diaminopimeloyl-D-alanyl-D-alanine + di-trans,octa-cis-undecaprenyl phosphate = di-trans,octa-cis-undecaprenyl diphospho-N-acetyl-alpha-D-muramoyl-L-alanyl-D-glutamyl-meso-2,6-diaminopimeloyl-D-alanyl-D-alanine + UMP. The protein operates within cell wall biogenesis; peptidoglycan biosynthesis. Its function is as follows. Catalyzes the initial step of the lipid cycle reactions in the biosynthesis of the cell wall peptidoglycan: transfers peptidoglycan precursor phospho-MurNAc-pentapeptide from UDP-MurNAc-pentapeptide onto the lipid carrier undecaprenyl phosphate, yielding undecaprenyl-pyrophosphoryl-MurNAc-pentapeptide, known as lipid I. The polypeptide is Phospho-N-acetylmuramoyl-pentapeptide-transferase (Prochlorococcus marinus (strain MIT 9215)).